Here is a 526-residue protein sequence, read N- to C-terminus: MPYHEFEVSKCIPERREHAVMKAAGEDLTSCLPKGYLNTIPGTISERGCAYCGAKHVIGTPMKDVIHISHGPNGCTYDTWQTKRYISDNDNFQLKYTFATDVKEKHVVFGAEGLLKKSMHEAFDAFPNIKRMTVYQTCTTALIGDDVDAIAKEVMEERGDVDVFVCNSPGFAGPSQSGGHHKINIAWLNQKVGTVEPDYLGEHVINYVGEYNIQGDQEVMIDYFNRMGIQVLSTFTGNGSYDSLRMMHRAHLNVLECARSAEYICDELRARYGIPRLDIDGFGFEPLANSLRKVALFFGIEDKAEAIIAEEYAKWKPQLDWYKERLKGKKVCLWPGGSKLWHWAHAIEEEMGLKVVSVYTKFGHQGDMEKGVSRCGEGALAIDDPNELESVEAIEMLKPDIIFTGKRPGEFVKKHGVPYLNAHAYHNGPYKGFEGWVRFARDIYNAIYSPMRQLAALDISAPDAAITSGFRTAKMNADLTVSDEVKFSEVLHEYTGKYDSIAEIRARNQPMPPSRKLRDAVQPAAE.

[8Fe-7S] cluster contacts are provided by Cys49, Cys75, and Cys138. [8Fe-9S-C-homocitryl] cluster-binding residues include Cys257 and His423. Residues 507 to 526 are disordered; sequence RNQPMPPSRKLRDAVQPAAE.

The protein belongs to the NifD/NifK/NifE/NifN family. In terms of assembly, hexamer of two alpha, two beta, and two delta chains. [8Fe-7S] cluster serves as cofactor. [8Fe-9S-C-homocitryl] cluster is required as a cofactor.

It carries out the reaction N2 + 8 reduced [2Fe-2S]-[ferredoxin] + 16 ATP + 16 H2O = H2 + 8 oxidized [2Fe-2S]-[ferredoxin] + 2 NH4(+) + 16 ADP + 16 phosphate + 6 H(+). Functionally, this iron-iron protein is part of the nitrogenase complex that catalyzes the key enzymatic reactions in nitrogen fixation. Other nitrogenase complexes utilize a molybdenum-iron protein or a vanadium-iron protein. This is Nitrogenase iron-iron protein alpha chain (anfD) from Rhodobacter capsulatus (Rhodopseudomonas capsulata).